Reading from the N-terminus, the 123-residue chain is Large ribosomal subunit protein uL14 (123 aa).

The protein belongs to the universal ribosomal protein uL14 family. Part of the 50S ribosomal subunit. Forms a cluster with proteins L3 and L19. In the 70S ribosome, L14 and L19 interact and together make contacts with the 16S rRNA in bridges B5 and B8.

Functionally, binds to 23S rRNA. Forms part of two intersubunit bridges in the 70S ribosome. The polypeptide is Large ribosomal subunit protein uL14 (Zymomonas mobilis subsp. mobilis (strain ATCC 31821 / ZM4 / CP4)).